The primary structure comprises 136 residues: Histone H3 (136 aa).

Residues 1-43 (MARTKQTARKSTGGKAPRKQLATKAARKSAPATGGVKKPHRYR) are disordered. Lysine 5 bears the N6-methylated lysine mark. Lysine 10 is subject to N6-acetyllysine; alternate. Lysine 10 carries the N6-methylated lysine; alternate modification. Serine 11 bears the Phosphoserine mark. Lysine 15 and lysine 24 each carry N6-acetyllysine. Residues lysine 28, lysine 37, and lysine 80 each carry the N6-methylated lysine modification.

Belongs to the histone H3 family. As to quaternary structure, the nucleosome is a histone octamer containing two molecules each of H2A, H2B, H3 and H4 assembled in one H3-H4 heterotetramer and two H2A-H2B heterodimers. The octamer wraps approximately 147 bp of DNA. Post-translationally, acetylation is generally linked to gene activation. In terms of processing, methylation at Lys-5 is linked to gene activation. Methylation at Lys-10 is linked to gene repression.

It localises to the nucleus. The protein resides in the chromosome. Functionally, core component of nucleosome. Nucleosomes wrap and compact DNA into chromatin, limiting DNA accessibility to the cellular machineries which require DNA as a template. Histones thereby play a central role in transcription regulation, DNA repair, DNA replication and chromosomal stability. DNA accessibility is regulated via a complex set of post-translational modifications of histones, also called histone code, and nucleosome remodeling. The sequence is that of Histone H3 from Platynereis dumerilii (Dumeril's clam worm).